The sequence spans 369 residues: Phosphoribosylformylglycinamidine cyclo-ligase (369 aa).

The disordered stretch occupies residues Met1–Gly22.

Belongs to the AIR synthase family.

The protein resides in the cytoplasm. The catalysed reaction is 2-formamido-N(1)-(5-O-phospho-beta-D-ribosyl)acetamidine + ATP = 5-amino-1-(5-phospho-beta-D-ribosyl)imidazole + ADP + phosphate + H(+). It participates in purine metabolism; IMP biosynthesis via de novo pathway; 5-amino-1-(5-phospho-D-ribosyl)imidazole from N(2)-formyl-N(1)-(5-phospho-D-ribosyl)glycinamide: step 2/2. This is Phosphoribosylformylglycinamidine cyclo-ligase from Mesorhizobium japonicum (strain LMG 29417 / CECT 9101 / MAFF 303099) (Mesorhizobium loti (strain MAFF 303099)).